Reading from the N-terminus, the 370-residue chain is Aldo-keto reductase dtxS3 (370 aa).

NADP(+) is bound at residue aspartate 78. Tyrosine 83 (proton donor) is an active-site residue. Substrate is bound at residue histidine 174. NADP(+) is bound by residues 204–205 (SS), glutamine 230, 259–269 (GPLASGRLARR), and 333–341 (GSVGRIEEA).

Belongs to the aldo/keto reductase family.

It functions in the pathway secondary metabolite biosynthesis. Aldo-keto reductase; part of the gene cluster that mediates the biosynthesis of destruxins, insecticidal cyclic hexadepsipeptides which induce flaccid paralysis and visceral muscle contraction in insects through targeting the calcium channels and vacuolar-type ATPases. The aldo-keto reductase dtxS3 converts alpha-ketoisocaproic acid from deaminated leucine into alpha-hydroxyisocaproic acid (HIC), which is the first substrate for destruxin assembly by dtxS1. L-aspartate decarboxylase dtxS4 converts aspartic acid into beta-alanine, the last substrate for the destruxin assembly line performed by dtxS1. The nonribosomal peptide synthetase dtxS1 synthesizes destruxins B and B2, whereas the cytochrome P450 monooxygenase dtxS2 is required to convert destruxin B into other destruxin derivatives, including destructins C, D, A and E. Destruxin E-diol (ED) is further produced in a non-enzymatic manner from destruxin E. Destruxins play an important role in virulence and escape from insect host immune defenses. The sequence is that of Aldo-keto reductase dtxS3 from Metarhizium robertsii (strain ARSEF 23 / ATCC MYA-3075) (Metarhizium anisopliae (strain ARSEF 23)).